A 1163-amino-acid polypeptide reads, in one-letter code: Pesticidal crystal protein Cry26Aa (1163 aa).

The protein belongs to the delta endotoxin family.

Its function is as follows. Promotes colloidosmotic lysis by binding to the midgut epithelial cells of insects. This Bacillus thuringiensis subsp. finitimus protein is Pesticidal crystal protein Cry26Aa (cry26Aa).